The primary structure comprises 1073 residues: Carbamoyl phosphate synthase large chain (1073 aa).

Positions 1–403 (MPKRTDIKSI…SLQKALRGLE (403 aa)) are carboxyphosphate synthetic domain. Arg129, Arg169, Gly175, Gly176, Glu208, Leu210, Glu215, Gly241, Val242, His243, Gln285, and Glu299 together coordinate ATP. Residues 133-328 (DKAMKDIGLE…IAKIAAKLAI (196 aa)) enclose the ATP-grasp 1 domain. 3 residues coordinate Mg(2+): Gln285, Glu299, and Asn301. Residues Gln285, Glu299, and Asn301 each contribute to the Mn(2+) site. The segment at 404–553 (VGACGLDPKV…YSTYEEECEA (150 aa)) is oligomerization domain. Residues 554 to 935 (NPSTRDKIMI…AFAKAQMGAS (382 aa)) form a carbamoyl phosphate synthetic domain region. An ATP-grasp 2 domain is found at 678 to 869 (QQMVQRLSLL…LAMIAARVMA (192 aa)). Residues Arg714, His753, Leu755, Glu760, Gly785, Val786, His787, Ser788, Gln828, and Glu840 each contribute to the ATP site. The Mg(2+) site is built by Gln828, Glu840, and Asn842. Mn(2+) is bound by residues Gln828, Glu840, and Asn842. The 138-residue stretch at 936–1073 (EVLPTGGTAF…LQDLHAGLKA (138 aa)) folds into the MGS-like domain. An allosteric domain region spans residues 936-1073 (EVLPTGGTAF…LQDLHAGLKA (138 aa)).

Belongs to the CarB family. In terms of assembly, composed of two chains; the small (or glutamine) chain promotes the hydrolysis of glutamine to ammonia, which is used by the large (or ammonia) chain to synthesize carbamoyl phosphate. Tetramer of heterodimers (alpha,beta)4. Mg(2+) is required as a cofactor. Mn(2+) serves as cofactor.

The catalysed reaction is hydrogencarbonate + L-glutamine + 2 ATP + H2O = carbamoyl phosphate + L-glutamate + 2 ADP + phosphate + 2 H(+). The enzyme catalyses hydrogencarbonate + NH4(+) + 2 ATP = carbamoyl phosphate + 2 ADP + phosphate + 2 H(+). The protein operates within amino-acid biosynthesis; L-arginine biosynthesis; carbamoyl phosphate from bicarbonate: step 1/1. It participates in pyrimidine metabolism; UMP biosynthesis via de novo pathway; (S)-dihydroorotate from bicarbonate: step 1/3. Large subunit of the glutamine-dependent carbamoyl phosphate synthetase (CPSase). CPSase catalyzes the formation of carbamoyl phosphate from the ammonia moiety of glutamine, carbonate, and phosphate donated by ATP, constituting the first step of 2 biosynthetic pathways, one leading to arginine and/or urea and the other to pyrimidine nucleotides. The large subunit (synthetase) binds the substrates ammonia (free or transferred from glutamine from the small subunit), hydrogencarbonate and ATP and carries out an ATP-coupled ligase reaction, activating hydrogencarbonate by forming carboxy phosphate which reacts with ammonia to form carbamoyl phosphate. This Pseudomonas putida (strain ATCC 47054 / DSM 6125 / CFBP 8728 / NCIMB 11950 / KT2440) protein is Carbamoyl phosphate synthase large chain.